A 391-amino-acid chain; its full sequence is 3-ketoacyl-CoA thiolase (391 aa).

C95 functions as the Acyl-thioester intermediate in the catalytic mechanism. Active-site proton acceptor residues include H347 and C377.

The protein belongs to the thiolase-like superfamily. Thiolase family. In terms of assembly, heterotetramer of two alpha chains (FadB) and two beta chains (FadA).

The protein resides in the cytoplasm. The catalysed reaction is an acyl-CoA + acetyl-CoA = a 3-oxoacyl-CoA + CoA. It functions in the pathway lipid metabolism; fatty acid beta-oxidation. In terms of biological role, catalyzes the final step of fatty acid oxidation in which acetyl-CoA is released and the CoA ester of a fatty acid two carbons shorter is formed. The chain is 3-ketoacyl-CoA thiolase from Alcanivorax borkumensis (strain ATCC 700651 / DSM 11573 / NCIMB 13689 / SK2).